A 508-amino-acid chain; its full sequence is Bifunctional purine biosynthesis protein PurH (508 aa).

The MGS-like domain maps to 1–144 (MTRALLSVSD…KNFASVLPIV (144 aa)).

The protein belongs to the PurH family.

It catalyses the reaction (6R)-10-formyltetrahydrofolate + 5-amino-1-(5-phospho-beta-D-ribosyl)imidazole-4-carboxamide = 5-formamido-1-(5-phospho-D-ribosyl)imidazole-4-carboxamide + (6S)-5,6,7,8-tetrahydrofolate. The enzyme catalyses IMP + H2O = 5-formamido-1-(5-phospho-D-ribosyl)imidazole-4-carboxamide. Its pathway is purine metabolism; IMP biosynthesis via de novo pathway; 5-formamido-1-(5-phospho-D-ribosyl)imidazole-4-carboxamide from 5-amino-1-(5-phospho-D-ribosyl)imidazole-4-carboxamide (10-formyl THF route): step 1/1. It functions in the pathway purine metabolism; IMP biosynthesis via de novo pathway; IMP from 5-formamido-1-(5-phospho-D-ribosyl)imidazole-4-carboxamide: step 1/1. This is Bifunctional purine biosynthesis protein PurH from Leuconostoc mesenteroides subsp. mesenteroides (strain ATCC 8293 / DSM 20343 / BCRC 11652 / CCM 1803 / JCM 6124 / NCDO 523 / NBRC 100496 / NCIMB 8023 / NCTC 12954 / NRRL B-1118 / 37Y).